Consider the following 327-residue polypeptide: Tetraacyldisaccharide 4'-kinase (327 aa).

Residue 52–59 coordinates ATP; sequence TLGGAGKT.

The protein belongs to the LpxK family.

The catalysed reaction is a lipid A disaccharide + ATP = a lipid IVA + ADP + H(+). It participates in glycolipid biosynthesis; lipid IV(A) biosynthesis; lipid IV(A) from (3R)-3-hydroxytetradecanoyl-[acyl-carrier-protein] and UDP-N-acetyl-alpha-D-glucosamine: step 6/6. Its function is as follows. Transfers the gamma-phosphate of ATP to the 4'-position of a tetraacyldisaccharide 1-phosphate intermediate (termed DS-1-P) to form tetraacyldisaccharide 1,4'-bis-phosphate (lipid IVA). The chain is Tetraacyldisaccharide 4'-kinase from Methylorubrum populi (strain ATCC BAA-705 / NCIMB 13946 / BJ001) (Methylobacterium populi).